Consider the following 310-residue polypeptide: Ribosomal protein uL3 glutamine methyltransferase (310 aa).

It belongs to the protein N5-glutamine methyltransferase family. PrmB subfamily.

It catalyses the reaction L-glutaminyl-[ribosomal protein uL3] + S-adenosyl-L-methionine = N(5)-methyl-L-glutaminyl-[ribosomal protein uL3] + S-adenosyl-L-homocysteine + H(+). Methylates large ribosomal subunit protein uL3 on a specific glutamine residue. In Yersinia pestis, this protein is Ribosomal protein uL3 glutamine methyltransferase.